Reading from the N-terminus, the 127-residue chain is Cold-regulated protein 1 (127 aa).

The tract at residues 39–127 is disordered; that stretch reads ARGPPPSPAP…WTRPRMARAR (89 aa). Basic residues predominate over residues 85–101; sequence SRRRRRRRATRRARSRM. Positions 102–121 are enriched in low complexity; the sequence is PRTTPWRAPRAPARAWWTRP.

The sequence is that of Cold-regulated protein 1 from Hordeum vulgare (Barley).